Consider the following 315-residue polypeptide: Lipoyl synthase (315 aa).

[4Fe-4S] cluster is bound by residues Cys63, Cys68, Cys74, Cys89, Cys93, Cys96, and Ser303. One can recognise a Radical SAM core domain in the interval Phe75–Val292.

Belongs to the radical SAM superfamily. Lipoyl synthase family. The cofactor is [4Fe-4S] cluster.

The protein resides in the cytoplasm. The enzyme catalyses [[Fe-S] cluster scaffold protein carrying a second [4Fe-4S](2+) cluster] + N(6)-octanoyl-L-lysyl-[protein] + 2 oxidized [2Fe-2S]-[ferredoxin] + 2 S-adenosyl-L-methionine + 4 H(+) = [[Fe-S] cluster scaffold protein] + N(6)-[(R)-dihydrolipoyl]-L-lysyl-[protein] + 4 Fe(3+) + 2 hydrogen sulfide + 2 5'-deoxyadenosine + 2 L-methionine + 2 reduced [2Fe-2S]-[ferredoxin]. The protein operates within protein modification; protein lipoylation via endogenous pathway; protein N(6)-(lipoyl)lysine from octanoyl-[acyl-carrier-protein]: step 2/2. In terms of biological role, catalyzes the radical-mediated insertion of two sulfur atoms into the C-6 and C-8 positions of the octanoyl moiety bound to the lipoyl domains of lipoate-dependent enzymes, thereby converting the octanoylated domains into lipoylated derivatives. This is Lipoyl synthase from Chromobacterium violaceum (strain ATCC 12472 / DSM 30191 / JCM 1249 / CCUG 213 / NBRC 12614 / NCIMB 9131 / NCTC 9757 / MK).